Here is a 166-residue protein sequence, read N- to C-terminus: Endoribonuclease YbeY (166 aa).

The Zn(2+) site is built by histidine 111, histidine 115, and histidine 121. The disordered stretch occupies residues 141-166 (LGYPDPYADDESADHPHSDTPSKDHE). Residues 153 to 166 (ADHPHSDTPSKDHE) show a composition bias toward basic and acidic residues.

It belongs to the endoribonuclease YbeY family. Requires Zn(2+) as cofactor.

It is found in the cytoplasm. In terms of biological role, single strand-specific metallo-endoribonuclease involved in late-stage 70S ribosome quality control and in maturation of the 3' terminus of the 16S rRNA. In Pseudomonas syringae pv. tomato (strain ATCC BAA-871 / DC3000), this protein is Endoribonuclease YbeY.